Reading from the N-terminus, the 418-residue chain is MTLLALGINHKTAPVSLRERVTFSPDTLDQALDSLLAQPMVQGGVVLSTCNRTELYLSVEEQDNLQEALIRWLCDYHNLNEDDLRNSLYWHQDNDAVSHLMRVASGLDSLVLGEPQILGQVKKAFADSQKGHLNASALERMFQKSFSVAKRVRTETDIGASAVSVAFAACTLARQIFESLSTVTVLLVGAGETIELVARHLREHKVQKMIIANRTRERAQALADEVGAEVISLSDIDARLQDADIIISSTASPLPIIGKGMVERALKSRRNQPMLLVDIAVPRDVEPEVGKLANAYLYSVDDLQSIISHNLAQRQAAAVEAETIVEQEASEFMAWLRAQGASETIREYRSQSEQIRDELTTKALSALQQGGDAQAILQDLAWKLTNRLIHAPTKSLQQAARDGDDERLNILRDSLGLE.

Residues 49-52 (TCNR), Ser109, 114-116 (EPQ), and Gln120 contribute to the substrate site. Cys50 functions as the Nucleophile in the catalytic mechanism. 189 to 194 (GAGETI) serves as a coordination point for NADP(+).

Belongs to the glutamyl-tRNA reductase family. As to quaternary structure, homodimer.

The enzyme catalyses (S)-4-amino-5-oxopentanoate + tRNA(Glu) + NADP(+) = L-glutamyl-tRNA(Glu) + NADPH + H(+). The protein operates within porphyrin-containing compound metabolism; protoporphyrin-IX biosynthesis; 5-aminolevulinate from L-glutamyl-tRNA(Glu): step 1/2. In terms of biological role, catalyzes the NADPH-dependent reduction of glutamyl-tRNA(Glu) to glutamate 1-semialdehyde (GSA). The chain is Glutamyl-tRNA reductase from Salmonella heidelberg (strain SL476).